We begin with the raw amino-acid sequence, 340 residues long: L-threonine 3-dehydrogenase (340 aa).

Cysteine 38 contacts Zn(2+). Residues threonine 40 and histidine 43 each act as charge relay system in the active site. The Zn(2+) site is built by histidine 63, glutamate 64, cysteine 93, cysteine 96, cysteine 99, and cysteine 107. Residues isoleucine 175, aspartate 195, arginine 200, leucine 261–isoleucine 263, and isoleucine 285–tyrosine 286 each bind NAD(+).

It belongs to the zinc-containing alcohol dehydrogenase family. As to quaternary structure, homotetramer. Zn(2+) is required as a cofactor.

The protein resides in the cytoplasm. It carries out the reaction L-threonine + NAD(+) = (2S)-2-amino-3-oxobutanoate + NADH + H(+). It functions in the pathway amino-acid degradation; L-threonine degradation via oxydo-reductase pathway; glycine from L-threonine: step 1/2. Its function is as follows. Catalyzes the NAD(+)-dependent oxidation of L-threonine to 2-amino-3-ketobutyrate. This Xanthomonas axonopodis pv. citri (strain 306) protein is L-threonine 3-dehydrogenase.